The sequence spans 533 residues: Adenosine deaminase (533 aa).

The signal sequence occupies residues 1–19 (MKILLAVVFVLNLTNLAVP).

The protein belongs to the metallo-dependent hydrolases superfamily. Adenosine and AMP deaminases family. ADGF subfamily. Requires Zn(2+) as cofactor. In terms of processing, proteolytically cleaved by human mast cell tryptase and chymase. In terms of tissue distribution, female salivary gland (at protein level).

The protein resides in the secreted. It catalyses the reaction adenosine + H2O + H(+) = inosine + NH4(+). The catalysed reaction is 2'-deoxyadenosine + H2O + H(+) = 2'-deoxyinosine + NH4(+). Functionally, catalyzes the deamination of adenosine to inosine and deoxyadenosine to deoxyinosine. Induces degranulation of host mast cells, and secretion of tryptase and IL6. Modulates enzymatic activities of human tryptase and chymase. Induces release of cytokines, such as IL1B, IL6, TNF, CCL2, IFN-beta (INFB1) and ISG15, from host monocytes and macrophages. Activates host NF-kappa-B signaling pathway in TAK1/MAP3K7-dependent manner. Its function is as follows. (Microbial infection) Promotes replication of dengue virus type 2 in host cells probably via modulation of cytokine production in host macrophages and monocytes. This Aedes albopictus (Asian tiger mosquito) protein is Adenosine deaminase.